We begin with the raw amino-acid sequence, 234 residues long: Uridylate kinase (234 aa).

An ATP-binding site is contributed by G10–S11. A UMP-binding site is contributed by G44. Residues G45 and R49 each contribute to the ATP site. UMP-binding positions include D66 and I114–T120. Positions 140, 146, and 149 each coordinate ATP.

This sequence belongs to the UMP kinase family. In terms of assembly, homohexamer.

The protein localises to the cytoplasm. The catalysed reaction is UMP + ATP = UDP + ADP. It functions in the pathway pyrimidine metabolism; CTP biosynthesis via de novo pathway; UDP from UMP (UMPK route): step 1/1. Its activity is regulated as follows. Inhibited by UTP. Functionally, catalyzes the reversible phosphorylation of UMP to UDP. In Methanoculleus marisnigri (strain ATCC 35101 / DSM 1498 / JR1), this protein is Uridylate kinase.